A 132-amino-acid chain; its full sequence is uncharacterized protein (132 aa).

WD repeat units follow at residues 14–53 (DLQDDISSVCCSPCNRYIIIASGNNCQHIYYLCATNLEIL) and 58–97 (AHDDSIVHLVSTLDGKYIVSSGLDGLIKIWNFKTANLANV).

This is an uncharacterized protein from Acanthamoeba polyphaga (Amoeba).